The following is a 457-amino-acid chain: Siroheme synthase (457 aa).

The interval 1–204 (MDHLPIFCQL…NDQKAITETT (204 aa)) is precorrin-2 dehydrogenase /sirohydrochlorin ferrochelatase. NAD(+) contacts are provided by residues 22–23 (DV) and 43–44 (LA). Ser-128 carries the phosphoserine modification. The interval 216-457 (GEVVLVGAGP…RDKLNWFSNH (242 aa)) is uroporphyrinogen-III C-methyltransferase. Pro-225 is a binding site for S-adenosyl-L-methionine. The active-site Proton acceptor is the Asp-248. The active-site Proton donor is the Lys-270. Residues 301–303 (GGD), Ile-306, 331–332 (TA), Met-382, and Gly-411 contribute to the S-adenosyl-L-methionine site.

This sequence in the N-terminal section; belongs to the precorrin-2 dehydrogenase / sirohydrochlorin ferrochelatase family. In the C-terminal section; belongs to the precorrin methyltransferase family.

It carries out the reaction uroporphyrinogen III + 2 S-adenosyl-L-methionine = precorrin-2 + 2 S-adenosyl-L-homocysteine + H(+). It catalyses the reaction precorrin-2 + NAD(+) = sirohydrochlorin + NADH + 2 H(+). The enzyme catalyses siroheme + 2 H(+) = sirohydrochlorin + Fe(2+). Its pathway is cofactor biosynthesis; adenosylcobalamin biosynthesis; precorrin-2 from uroporphyrinogen III: step 1/1. It functions in the pathway cofactor biosynthesis; adenosylcobalamin biosynthesis; sirohydrochlorin from precorrin-2: step 1/1. The protein operates within porphyrin-containing compound metabolism; siroheme biosynthesis; precorrin-2 from uroporphyrinogen III: step 1/1. It participates in porphyrin-containing compound metabolism; siroheme biosynthesis; siroheme from sirohydrochlorin: step 1/1. Its pathway is porphyrin-containing compound metabolism; siroheme biosynthesis; sirohydrochlorin from precorrin-2: step 1/1. Functionally, multifunctional enzyme that catalyzes the SAM-dependent methylations of uroporphyrinogen III at position C-2 and C-7 to form precorrin-2 via precorrin-1. Then it catalyzes the NAD-dependent ring dehydrogenation of precorrin-2 to yield sirohydrochlorin. Finally, it catalyzes the ferrochelation of sirohydrochlorin to yield siroheme. The polypeptide is Siroheme synthase (Escherichia coli O6:H1 (strain CFT073 / ATCC 700928 / UPEC)).